The chain runs to 3038 residues: Lovastatin nonaketide synthase, polyketide synthase component (3038 aa).

The Ketosynthase family 3 (KS3) domain maps to 8 to 447 (NEPIVVVGSG…GTNAHAIIEE (440 aa)). Catalysis depends on for beta-ketoacyl synthase activity residues Cys-181, His-320, and His-367. The interval 562-889 (IFTGQGAQWP…GKNDLDSFSR (328 aa)) is malonyl-CoA:ACP transacylase (MAT) domain. The active-site For malonyltransferase activity is Ser-656. Residues 695 to 757 (AMLAAGMSFE…DESTFARLLK (63 aa)) are lovC-binding. Residues 953–1089 (HLLLGKLSEY…GQLALTIEDV (137 aa)) form an N-terminal hotdog fold region. Residues 953–1263 (HLLLGKLSEY…ENITFKPFSP (311 aa)) form a dehydratase (DH) domain region. Residues 953–1267 (HLLLGKLSEY…FKPFSPPDAS (315 aa)) enclose the PKS/mFAS DH domain. His-985 serves as the catalytic Proton acceptor; for dehydratase activity. The segment at 1107-1267 (EEHPHMNRVN…FKPFSPPDAS (161 aa)) is C-terminal hotdog fold. Asp-1174 functions as the Proton donor; for dehydratase activity in the catalytic mechanism. The interval 1443 to 1543 (LEIGAGTGGA…ARSLLKPGGQ (101 aa)) is methyltransferase (CMet) domain. A ketoreductase (KR) domain region spans residues 2139 to 2437 (TLPTRVRSID…KIPEYRGAKA (299 aa)). Positions 2463-2538 (QIVIDGLSAK…DLANEAAARL (76 aa)) constitute a Carrier domain. The residue at position 2498 (Ser-2498) is an O-(pantetheine 4'-phosphoryl)serine. Residues 2546–2602 (VAATDGGAESTDNTSENEVSGREDTDLSAAATITEPSSADEDDTEPGDEDVPRSHHP) are disordered. A compositionally biased stretch (acidic residues) spans 2583–2594 (SADEDDTEPGDE). An inactive Condensation domain region spans residues 2602-2952 (PLSLGQEYSW…PTSNQPAPLF (351 aa)).

As to quaternary structure, homodimer. Each MAT domain from the lovB homodimer binds one lovC molecule to form the final active lovB-lovC megasynthase complex. The cofactor is pantetheine 4'-phosphate.

The catalysed reaction is holo-[lovastatin nonaketide synthase] + 9 malonyl-CoA + S-adenosyl-L-methionine + 11 NADPH + 19 H(+) = dihydromonacolin L-[lovastatin nonaketide synthase] + S-adenosyl-L-homocysteine + 9 CO2 + 11 NADP(+) + 9 CoA + 6 H2O. It functions in the pathway polyketide biosynthesis; lovastatin biosynthesis. Its function is as follows. Lovastatin nonaketide synthase; part of the gene cluster that mediates the biosynthesis of lovastatin (also known as mevinolin, mevacor or monacolin K), a hypolipidemic inhibitor of (3S)-hydroxymethylglutaryl-coenzyme A (HMG-CoA) reductase (HMGR). The first step in the biosynthesis of lovastatin is the production of dihydromonacolin L acid by the lovastatin nonaketide synthase lovB and the trans-acting enoyl reductase lovC (called the lovB-lovC megasynthase complex) via condensation of one acetyl-CoA unit and 8 malonyl-CoA units. The formation of the LovB/C complex is essential for the integrity of the catalytic chamber to the complete total synthesis of DML acid. Dihydromonacolin L acid is released from lovB by the thioesterase lovG. Next, dihydromonacolin L acid is oxidized by the dihydromonacolin L monooxygenase lovA twice to form monacolin J acid. The 2-methylbutyrate moiety of lovastatin is synthesized by the lovastatin diketide synthase lovF via condensation of one acetyl-CoA unit and one malonyl-CoA unit. Finally, the covalent attachment of this moiety to monacolin J acid is catalyzed by the transesterase lovD to yield lovastatin. LovD has broad substrate specificity and can also convert monacolin J to simvastatin using alpha-dimethylbutanoyl-S-methyl-3-mercaptopropionate (DMB-S-MMP) as the thioester acyl donor, and can also catalyze the reverse reaction and function as hydrolase in vitro. LovD has much higher activity with LovF-bound 2-methylbutanoate than with free diketide substrates. The chain is Lovastatin nonaketide synthase, polyketide synthase component from Aspergillus terreus.